Consider the following 46-residue polypeptide: Iota-conotoxin RXIA (46 aa).

4-hydroxyproline; partial occurs at positions 2 and 11. Disulfide bonds link Cys5-Cys19, Cys12-Cys22, Cys18-Cys27, and Cys21-Cys38. Pro29 is modified (4-hydroxyproline). D-phenylalanine is present on Phe44.

It belongs to the conotoxin I1 superfamily. Post-translationally, the natural D-Phe-44 form of the peptide is more potent than the L-Phe-44 form. As to expression, expressed by the venom duct.

The protein resides in the secreted. Its function is as follows. Iota-conotoxins bind to voltage-gated sodium channels and act as agonists by shifting the voltage-dependence of activation to more hyperpolarized levels. This toxin acts on Nav1.6/SCN8A &gt; Nav1.2/SCN2A &gt; Nav1.7/SCN9A sodium channels. Produces general excitatory symptoms upon intracorporeal injection and repetitive action potentials in the frog cutaneous pectoris muscle. Natural peptide (with D-Phe) is active on nerve, but not on muscle. Synthetic peptide (with L-Phe) is not active on both nerve and muscle. This Conus radiatus (Rayed cone) protein is Iota-conotoxin RXIA.